Here is a 419-residue protein sequence, read N- to C-terminus: Odorant receptor 56a (419 aa).

At 1-41 (MFKVKDLLLSPTTFEDPIFGTHLRYFQWYGYVASKDQNRPL) the chain is on the cytoplasmic side. Residues 42–62 (LSLIRCTILTASIWLSCALML) form a helical membrane-spanning segment. At 63 to 76 (ARVFRGYENLNDGA) the chain is on the extracellular side. The chain crosses the membrane as a helical span at residues 77–97 (TSYATAVQYFAVSIAMFNAYV). Over 98-137 (QRDKVISLLRVAHSDIQNLMHEADNREMELLVATQAYTRT) the chain is Cytoplasmic. Residues 138 to 158 (ITLLIWIPSVIAGLMAYSDCI) form a helical membrane-spanning segment. At 159 to 196 (YRSLFLPKSVFNVPAVRRGEEHPILLFQLFPFGELCDN) the chain is on the extracellular side. Residues 197–217 (FVVGYLGPWYALGLGITAIPL) traverse the membrane as a helical segment. At 218–292 (WHTFITCLMK…FVQELQYLIC (75 aa)) the chain is on the cytoplasmic side. Residues 293–313 (VPVMADFIIFSVLICFLFFAL) traverse the membrane as a helical segment. Residues 314–323 (TVGVPSKMDY) lie on the Extracellular side of the membrane. Residues 324–344 (FFMFIYLFVMAGILWIYHWHA) form a helical membrane-spanning segment. Residues 345–389 (TLIVECHDELSLAYFSCGWYNFEMPLQKMLVFMMMHAQRPMKMRA) are Cytoplasmic-facing. The chain crosses the membrane as a helical span at residues 390–410 (LLVDLNLRTFIDIGRGAYSYF). Over 411–419 (NLLRSSHLY) the chain is Extracellular.

This sequence belongs to the insect chemoreceptor superfamily. Heteromeric odorant receptor channel (TC 1.A.69) family. Or30a subfamily. Interacts with Orco. Complexes exist early in the endomembrane system in olfactory sensory neurons (OSNs), coupling these complexes to the conserved ciliary trafficking pathway. Expressed in olfactory sensory neurons in the antenna.

The protein resides in the cell membrane. Odorant receptor which mediates acceptance or avoidance behavior, depending on its substrates. The odorant receptor repertoire encodes a large collection of odor stimuli that vary widely in identity, intensity, and duration. May form a complex with Orco to form odorant-sensing units, providing sensitive and prolonged odorant signaling and calcium permeability. Specific receptor for geosmin, a microbial odorant that constitutes an ecologically relevant stimulus that alerts flies to the presence of harmful microbes and induces avoidance behavior. The chain is Odorant receptor 56a (Or56a) from Drosophila melanogaster (Fruit fly).